Here is a 91-residue protein sequence, read N- to C-terminus: Mercuric transport protein periplasmic component (91 aa).

The first 19 residues, 1-19 (MKKLFASLALAAVVAPVWA), serve as a signal peptide directing secretion. The HMA domain maps to 22-88 (QTVTLSVPGM…ATADAGYPSS (67 aa)). Hg(2+) is bound by residues cysteine 33 and cysteine 36.

The protein belongs to the MerP family. As to quaternary structure, monomer.

The protein resides in the periplasm. Functionally, involved in mercury resistance. Acts as a mercury scavenger that specifically binds to a mercuric ion in the periplasm and probably passes it to the cytoplasmic mercuric reductase MerA via the mercuric transport protein MerT. In Pseudomonas aeruginosa, this protein is Mercuric transport protein periplasmic component.